The chain runs to 342 residues: Aristolochene synthase (342 aa).

Asp115, Asn244, Ser248, and Glu252 together coordinate Mg(2+). 2 residues coordinate (2E,6E)-farnesyl diphosphate: Arg340 and Tyr341.

This sequence belongs to the terpene synthase family. In terms of assembly, homodimer. Requires Mg(2+) as cofactor.

It catalyses the reaction (2E,6E)-farnesyl diphosphate = (+)-aristolochene + diphosphate. It participates in sesquiterpene biosynthesis; aristolochene biosynthesis; aristolochene from farnesyl diphosphate: step 1/1. Its function is as follows. Aristolochene synthase; part of the gene cluster that mediates the biosynthesis of PR-toxin, a bicyclic sesquiterpene belonging to the eremophilane class and acting as a mycotoxin. The first step of the pathway is catalyzed by the aristolochene synthase which performs the cyclization of trans,trans-farnesyl diphosphate (FPP) to the bicyclic sesquiterpene aristolochene. Following the formation of aristolochene, the non-oxygenated aristolochene is converted to the trioxygenated intermediate eremofortin B, via 7-epi-neopetasone. This conversion appears to involve three enzymes, a hydroxysterol oxidase-like enzyme, the quinone-oxidase prx3 that forms the quinone-type-structure in the bicyclic nucleus of aristolochene with the C8-oxo group and the C-3 hydroxyl group, and the P450 monooxygenase ORF6 that introduces the epoxide at the double bond between carbons 1 and 2. No monoxy or dioxy-intermediates have been reported to be released to the broth, so these three early oxidative reactions may be coupled together. Eremofortin B is further oxidized by another P450 monooxygenase, that introduces a second epoxide between carbons 7 and 11 prior to acetylation to eremofortin A by the acetyltransferase ORF8. The second epoxidation may be performed by a second P450 monooxygenase. After the acetylation step, eremofortin A is converted to eremofortin C and then to PR-toxin. First the conversion of eremofortin A to eremofortin C proceeds by oxidation of the side chain of the molecule at C-12 and is catalyzed by the short-chain oxidoreductase prx1. The cytochrome P450 monooxygenase ORF5 also plays a role in this step. The primary alcohol formed at C-12 is finally oxidized by the short-chain alcohol dehydrogenase prx4 that forms PR-toxin. The protein is Aristolochene synthase of Penicillium roqueforti (strain FM164).